A 396-amino-acid chain; its full sequence is Capsular polysaccharide biosynthesis protein CapF (396 aa).

12 helical membrane-spanning segments follow: residues Y7–V27, A41–V61, A74–G94, I101–Y121, L129–Y149, H153–I173, I198–I218, L232–I252, M279–E299, I315–T335, L351–L371, and G372–Y392.

It belongs to the polysaccharide synthase family.

It localises to the cell membrane. It functions in the pathway capsule biogenesis; capsule polysaccharide biosynthesis. In terms of biological role, required for the biosynthesis of type 1 capsular polysaccharide. This Staphylococcus aureus protein is Capsular polysaccharide biosynthesis protein CapF (capF).